The sequence spans 2111 residues: Fatty acid synthase beta subunit aflB (2111 aa).

Residues isoleucine 200 to leucine 565 are acetyltransferase (AT) domain. Positions serine 618–aspartate 863 are enoyl reductase (ER) domain. The dehydratase (DH) domain stretch occupies residues glycine 1195 to isoleucine 1688. The 103-residue stretch at glutamate 1606–serine 1708 folds into the MaoC-like domain. The segment at tyrosine 1727–serine 2091 is malonyl/palmitoyl transferase (MT/PT) domain.

This sequence belongs to the fungal fatty acid synthetase subunit beta family. [Alpha(6)beta(6)] hexamers of two multifunctional subunits (alpha and beta).

It catalyses the reaction acetyl-CoA + n malonyl-CoA + 2n NADPH + 4n H(+) = a long-chain-acyl-CoA + n CoA + n CO2 + 2n NADP(+).. The catalysed reaction is holo-[ACP] + acetyl-CoA = acetyl-[ACP] + CoA. It carries out the reaction holo-[ACP] + malonyl-CoA = malonyl-[ACP] + CoA. The enzyme catalyses a (3R)-hydroxyacyl-[ACP] = a (2E)-enoyl-[ACP] + H2O. It catalyses the reaction a 2,3-saturated acyl-[ACP] + NAD(+) = a (2E)-enoyl-[ACP] + NADH + H(+). The catalysed reaction is (9Z)-octadecenoyl-[ACP] + H2O = (9Z)-octadecenoate + holo-[ACP] + H(+). Its pathway is secondary metabolite biosynthesis. Fatty acid synthase beta subunit; part of the gene cluster that mediates the biosynthesis of aspercryptins, linear lipopeptides built from six amino acids including 2 highly unusual and nonproteogenic amino acids, 2-amino-octanoic acid (2aoa) and 2-amino-dodecanol (2adol). The core structure of aspercryptins is as follows: Ser/Ala-Thr-Ile/Val-2aoa-Asn-2adol. The first step of aspercryptin biosynthesis is the generation of the fatty acid precursors, octanoic and dodecanoic acids, by the FAS subunits atnF and atnM. The fatty acid precursors are likely transformed into the corresponding alpha-amino fatty acids in three steps. First, they are hydroxylated by the cytochrome P450 monooxygenase atnE, then oxidized to the corresponding alpha-keto acids by the NAD(P)-dependent oxidoreductase atnD, and finally converted to the alpha-amino fatty acids by the PLP-dependent aminotransferases atnH or atnJ. the alpha-amino fatty acids, 2-amino-octanoic and 2-amino-dodecanoic acids, are recognized, activated, and covalently tethered to the NRPS atnA by its fourth and sixth adenylation domains. The second module of atnA is the Thr module and contains an epimerase (E) domain responsible for the epimerization of Thr to D-allo-Thr. Additionally, despite atnA having only one epimerase domain, the first amino acid of aspercryptin A1 is D-Ser, suggesting that serine is either loaded directly as D-Ser on the first module or that the epimerase domain in the threonine module epimerizes both L-Ser and L-Thr. After condensation of the hexapeptide of aspercryptin, the C-terminal reductase (TE) domain might be involved in the reductive release and production of the aldehyde hexapeptide. Further reduction would generate aspercryptins. The variety of aspercryptins produced reflects the flexibility of the atnA NRPS, allowing incorporation of alanine instead of serine, valine for isoleucine, and a C10 fatty amino alcohol instead of the C12 version. AtnB seems to be involved in the selectivity for Ile versus Val by the third module. Moreover, type B, C and D aspercryptins have an additional N-terminal cichorine, acetyl and propionyl group respectively. This is Fatty acid synthase beta subunit aflB from Emericella nidulans (strain FGSC A4 / ATCC 38163 / CBS 112.46 / NRRL 194 / M139) (Aspergillus nidulans).